The sequence spans 291 residues: Phosphate-binding protein PstS 2 (291 aa).

The first 21 residues, 1–21, serve as a signal peptide directing secretion; sequence MKFKKMLTLAAIGLSGFGLVA. The N-palmitoyl cysteine moiety is linked to residue C22. A lipid anchor (S-diacylglycerol cysteine) is attached at C22.

This sequence belongs to the PstS family. As to quaternary structure, the complex is composed of two ATP-binding proteins (PstB), two transmembrane proteins (PstC and PstA) and a solute-binding protein (PstS).

The protein resides in the cell membrane. Part of the ABC transporter complex PstSACB involved in phosphate import. The chain is Phosphate-binding protein PstS 2 (pstS2) from Streptococcus pneumoniae serotype 4 (strain ATCC BAA-334 / TIGR4).